We begin with the raw amino-acid sequence, 417 residues long: Serpin H1 (417 aa).

The signal sequence occupies residues 1–17 (MRSLLLGTLCLLAVALA). K93 bears the N6-succinyllysine mark. Residues N119 and N124 are each glycosylated (N-linked (GlcNAc...) asparagine). Position 140 is a phosphoserine (S140). An N6-acetyllysine modification is found at K206. N6-succinyllysine is present on K295. K318 carries the N6-acetyllysine modification. N394 carries an N-linked (GlcNAc...) asparagine glycan. The Prevents secretion from ER motif lies at 414-417 (RDEL).

This sequence belongs to the serpin family.

The protein localises to the endoplasmic reticulum lumen. Functionally, binds specifically to collagen. Could be involved as a chaperone in the biosynthetic pathway of collagen. The chain is Serpin H1 (Serpinh1) from Mus musculus (Mouse).